A 299-amino-acid chain; its full sequence is Probable lipid kinase YegS (299 aa).

The DAGKc domain occupies 2–133 (AEFPASLLIL…IDMAQVNKQT (132 aa)). Residues T40, 66–72 (GDGTINE), and T95 each bind ATP. The Mg(2+) site is built by L215, D218, and L220. E271 functions as the Proton acceptor in the catalytic mechanism.

This sequence belongs to the diacylglycerol/lipid kinase family. YegS lipid kinase subfamily. The cofactor is Mg(2+). Ca(2+) serves as cofactor.

It localises to the cytoplasm. In terms of biological role, probably phosphorylates lipids; the in vivo substrate is unknown. The chain is Probable lipid kinase YegS from Escherichia coli O6:K15:H31 (strain 536 / UPEC).